The following is a 339-amino-acid chain: Protein-glutamate methylesterase/protein-glutamine glutaminase 2 (339 aa).

Residues 2–119 (NIGIVNDLPL…GLSTDASPQA (118 aa)) form the Response regulatory domain. A 4-aspartylphosphate modification is found at aspartate 53. The 196-residue stretch at 141–336 (PGPAPERGQP…PQLISRITRP (196 aa)) folds into the CheB-type methylesterase domain. Catalysis depends on residues serine 158, histidine 185, and aspartate 278.

Belongs to the CheB family. In terms of processing, phosphorylated by CheA. Phosphorylation of the N-terminal regulatory domain activates the methylesterase activity.

Its subcellular location is the cytoplasm. It catalyses the reaction [protein]-L-glutamate 5-O-methyl ester + H2O = L-glutamyl-[protein] + methanol + H(+). The enzyme catalyses L-glutaminyl-[protein] + H2O = L-glutamyl-[protein] + NH4(+). Its function is as follows. Involved in chemotaxis. Part of a chemotaxis signal transduction system that modulates chemotaxis in response to various stimuli. Catalyzes the demethylation of specific methylglutamate residues introduced into the chemoreceptors (methyl-accepting chemotaxis proteins or MCP) by CheR. Also mediates the irreversible deamidation of specific glutamine residues to glutamic acid. The sequence is that of Protein-glutamate methylesterase/protein-glutamine glutaminase 2 from Burkholderia lata (strain ATCC 17760 / DSM 23089 / LMG 22485 / NCIMB 9086 / R18194 / 383).